A 617-amino-acid polypeptide reads, in one-letter code: Secretogranin-2 (617 aa).

The signal sequence occupies residues 1–27 (MAEAKTHWLGAALSLIPLIFLISGAEA). Positions 28–30 (ASF) are excised as a propeptide. A disordered region spans residues 123-147 (NEPQSVPKENKPHALNSEKNFPIDM). Sulfotyrosine is present on tyrosine 151. Residues serine 174, serine 268, serine 432, serine 532, serine 555, and serine 556 each carry the phosphoserine modification. The disordered stretch occupies residues 552–583 (NQGSSQETDKLAPVSKRFPVGPPKNDDTPNRQ).

This sequence belongs to the chromogranin/secretogranin protein family. As to quaternary structure, interacts with Secretogranin III/SCG3.

Its subcellular location is the secreted. Its function is as follows. Neuroendocrine protein of the granin family that regulates the biogenesis of secretory granules. This is Secretogranin-2 (SCG2) from Macaca fascicularis (Crab-eating macaque).